Consider the following 82-residue polypeptide: Host transcription reprogramming factor 10 (82 aa).

Positions 1 to 19 (MQIFNMVSLVALFALGATA) are cleaved as a signal peptide. The C2H2-type zinc-finger motif lies at 57–81 (WVCHACNKQFTTPAALQKHKDTVVH).

It localises to the secreted. Its subcellular location is the host nucleus. Functionally, probable secreted effector that translocates into the nuclei of host cells to reprogram the expression of targeted genes by binding on effector binding elements in rice. This chain is Host transcription reprogramming factor 10, found in Pyricularia oryzae (strain 70-15 / ATCC MYA-4617 / FGSC 8958) (Rice blast fungus).